The sequence spans 985 residues: Lateral signaling target protein 2 homolog (985 aa).

4 disordered regions span residues 310-453 (PLGS…ETDE), 498-520 (EYGA…PSTS), 533-640 (LRLP…SSLS), and 747-892 (DNVF…TTTA). Low complexity-rich tracts occupy residues 327–348 (HPTT…TNTH), 384–393 (SLSPNSTPTA), and 401–422 (PSHS…PADW). The span at 423–453 (SDGDDEDEEDDDDDIEVEEEELDSTDDETDE) shows a compositional bias: acidic residues. Residues Ser-537 and Ser-538 each carry the phosphoserine modification. Basic residues-rich tracts occupy residues 563–589 (VYRH…HHQH) and 596–607 (HPHRTTRSGRKR). Composition is skewed to low complexity over residues 629-640 (ASGDTSAASSLS) and 761-770 (NGNQANASAQ). Polar residues predominate over residues 776–785 (GSIQRNNTVD). Position 808 is a phosphoserine (Ser-808). Residues 812–866 (QESASTSTSSSQLHQEQQQLQIQVQRQRNNSVGSNTPSSASSTSSSSEQNSPVSA) show a composition bias toward low complexity. The span at 875 to 885 (QSNNETQMPSS) shows a compositional bias: polar residues. The FYVE-type zinc-finger motif lies at 904–964 (DGKAPRCMSC…VCRECYVREV (61 aa)). Positions 910, 913, 926, 929, 934, 937, 956, and 959 each coordinate Zn(2+).

Belongs to the lst-2 family.

In terms of biological role, negative regulator of epidermal growth factor receptor (EGFR) signaling. This Drosophila ananassae (Fruit fly) protein is Lateral signaling target protein 2 homolog.